The sequence spans 263 residues: 4-hydroxy-tetrahydrodipicolinate reductase (263 aa).

NAD(+)-binding positions include 7-12 (GFKGRM), 96-98 (GTT), and 122-125 (APNF). The Proton donor/acceptor role is filled by histidine 152. Position 153 (histidine 153) interacts with (S)-2,3,4,5-tetrahydrodipicolinate. The active-site Proton donor is lysine 156. Residue 162-163 (GT) participates in (S)-2,3,4,5-tetrahydrodipicolinate binding.

It belongs to the DapB family.

The protein resides in the cytoplasm. The enzyme catalyses (S)-2,3,4,5-tetrahydrodipicolinate + NAD(+) + H2O = (2S,4S)-4-hydroxy-2,3,4,5-tetrahydrodipicolinate + NADH + H(+). It carries out the reaction (S)-2,3,4,5-tetrahydrodipicolinate + NADP(+) + H2O = (2S,4S)-4-hydroxy-2,3,4,5-tetrahydrodipicolinate + NADPH + H(+). Its pathway is amino-acid biosynthesis; L-lysine biosynthesis via DAP pathway; (S)-tetrahydrodipicolinate from L-aspartate: step 4/4. Catalyzes the conversion of 4-hydroxy-tetrahydrodipicolinate (HTPA) to tetrahydrodipicolinate. The protein is 4-hydroxy-tetrahydrodipicolinate reductase of Listeria monocytogenes serovar 1/2a (strain ATCC BAA-679 / EGD-e).